The following is a 342-amino-acid chain: Cytoplasmic tRNA 2-thiolation protein 1 (342 aa).

It belongs to the TtcA family. CTU1/NCS6/ATPBD3 subfamily.

The protein resides in the cytoplasm. The protein operates within tRNA modification; 5-methoxycarbonylmethyl-2-thiouridine-tRNA biosynthesis. Its function is as follows. Plays a central role in 2-thiolation of mcm(5)S(2)U at tRNA wobble positions of tRNA(Lys), tRNA(Glu) and tRNA(Gln). Directly binds tRNAs and probably acts by catalyzing adenylation of tRNAs, an intermediate required for 2-thiolation. It is unclear whether it acts as a sulfurtransferase that transfers sulfur from thiocarboxylated URM1 onto the uridine of tRNAs at wobble position. The sequence is that of Cytoplasmic tRNA 2-thiolation protein 1 from Anopheles gambiae (African malaria mosquito).